A 270-amino-acid chain; its full sequence is tRNA pseudouridine synthase A (270 aa).

Aspartate 51 acts as the Nucleophile in catalysis. Tyrosine 109 is a binding site for substrate.

Belongs to the tRNA pseudouridine synthase TruA family. As to quaternary structure, homodimer.

It carries out the reaction uridine(38/39/40) in tRNA = pseudouridine(38/39/40) in tRNA. Formation of pseudouridine at positions 38, 39 and 40 in the anticodon stem and loop of transfer RNAs. The chain is tRNA pseudouridine synthase A from Burkholderia ambifaria (strain ATCC BAA-244 / DSM 16087 / CCUG 44356 / LMG 19182 / AMMD) (Burkholderia cepacia (strain AMMD)).